The chain runs to 177 residues: Large ribosomal subunit protein uL6 (177 aa).

Belongs to the universal ribosomal protein uL6 family. In terms of assembly, part of the 50S ribosomal subunit.

Functionally, this protein binds to the 23S rRNA, and is important in its secondary structure. It is located near the subunit interface in the base of the L7/L12 stalk, and near the tRNA binding site of the peptidyltransferase center. In Neisseria meningitidis serogroup C (strain 053442), this protein is Large ribosomal subunit protein uL6.